The primary structure comprises 118 residues: Inner membrane protein YhaI (118 aa).

The Periplasmic segment spans residues 1-25 (MQWYLSVLKNYVGFSGRARRKEYWM). A helical transmembrane segment spans residues 26-46 (FTLINAIVGAIINVIQLILGL). Position 47 (Glu47) is a topological domain, cytoplasmic. The chain crosses the membrane as a helical span at residues 48–68 (LPYLSMLYLLATFLPVLALAI). At 69–77 (RRLHDTDRS) the chain is on the periplasmic side. A helical membrane pass occupies residues 78-98 (GAWALLFFVPFIGWLVLLVFF). Over 99 to 118 (CTEGTSGSNRYGNDPKFGSN) the chain is Cytoplasmic.

It to E.coli YhaH.

The protein resides in the cell inner membrane. The protein is Inner membrane protein YhaI (yhaI) of Escherichia coli O157:H7.